A 273-amino-acid chain; its full sequence is MLKQAVEPTGGFSFENCQRNASLEHVLPGLRVPHARKTGTTIAGLVFRDGVILGADTRATNDSVVADKSCEKIHFIAPKIYCCGAGVAADTEMTTRMAASKMELHALSTGREPRVATVTRILRQTLFRYQGHVGASLVVGGVDLNGPQLYEVHPHGSYSRLPFTALGSGQGAAVALLEDRFQPNMTLEAAQELLVEAITAGILSDLGSGGNVDACVITAGGAKLQRALSTPTEPVQRAGRYRFAPGTTPVLTREVRPLTLELLEETVQAMEVE.

Position 1 is an N-acetylmethionine (methionine 1). The propeptide at 1–39 (MLKQAVEPTGGFSFENCQRNASLEHVLPGLRVPHARKTG) is removed in mature form. Catalysis depends on threonine 40, which acts as the Nucleophile.

The protein belongs to the peptidase T1B family. The 26S proteasome consists of a 20S proteasome core and two 19S regulatory subunits. The 20S proteasome core is composed of 28 subunits that are arranged in four stacked rings, resulting in a barrel-shaped structure. The two end rings are each formed by seven alpha subunits, and the two central rings are each formed by seven beta subunits. The catalytic chamber with the active sites is on the inside of the barrel. Component of the immunoproteasome, where it displaces the equivalent housekeeping subunit PSMB7. Component of the spermatoproteasome, a form of the proteasome specifically found in testis. Autocleaved. The resulting N-terminal Thr residue of the mature subunit is responsible for the nucleophile proteolytic activity. Detected in liver (at protein level).

It localises to the cytoplasm. The protein localises to the nucleus. It catalyses the reaction Cleavage of peptide bonds with very broad specificity.. The proteasome is a multicatalytic proteinase complex which is characterized by its ability to cleave peptides with Arg, Phe, Tyr, Leu, and Glu adjacent to the leaving group at neutral or slightly basic pH. The proteasome has an ATP-dependent proteolytic activity. This subunit is involved in antigen processing to generate class I binding peptides. Plays a role in determining the T-cell repertoire for an antiviral T-cell response. The chain is Proteasome subunit beta type-10 (Psmb10) from Mus musculus (Mouse).